The following is a 451-amino-acid chain: MGRLFGTDGVRGRANADLTPELALAVAVAAAHTLAEADRSHPPLAVVGRDTRASGEMLEAAVVAGLTSAGANVVRVGVLPTPAVAFLTAEAKADFGVMLSASHNPMPDNGIKLFAAGGHKLPDEIEMKIEAAIEANATTAWERPVGAGVGRVHDLLDGADHYVQHLVGTVPHRLDGIKVVVDCANGAAAEVAPAAYREAGAEVVEIHAKPDGLNINDECGSNHLAALQQAVVEHGAQLGIAHDGDADRCVAVSADGDEVDGDQVMAILALAMRQAGTLTADTLVATVMSNLGLRIAMSREGIRLVETKVGDRYVLEELRASGLALGGEQSGHIVMPAHATTGDGVLTGLHLMSRLAATGKSLAELAAVVTPLPQVLINVPVGDRTVGAVAPAVRAEVERAEVELGDAGRVLLRPSGTEPLVRVMVEASTETLARQVAERIADQVRTASPVG.

Catalysis depends on serine 102, which acts as the Phosphoserine intermediate. Residues serine 102, aspartate 243, aspartate 245, and aspartate 247 each coordinate Mg(2+). Serine 102 bears the Phosphoserine mark.

Belongs to the phosphohexose mutase family. The cofactor is Mg(2+). Post-translationally, activated by phosphorylation.

The catalysed reaction is alpha-D-glucosamine 1-phosphate = D-glucosamine 6-phosphate. Its function is as follows. Catalyzes the conversion of glucosamine-6-phosphate to glucosamine-1-phosphate. The chain is Phosphoglucosamine mutase from Salinispora arenicola (strain CNS-205).